Here is a 461-residue protein sequence, read N- to C-terminus: Proton extrusion protein PxcA (461 aa).

4 consecutive transmembrane segments (helical) span residues 244 to 264, 339 to 359, 386 to 406, and 421 to 441; these read FMLL…ALIV, LKNI…VFTG, IILF…EVLV, and FINM…KYWI.

This sequence belongs to the CemA family.

It localises to the cell inner membrane. Its function is as follows. Required for H(+) efflux immediately after light irradiation to form a rapid H(+) concentration gradient across the thylakoid membranes. Together with PxcL, contributes to transient H(+) uptake following dark to light transition. The protein is Proton extrusion protein PxcA of Thermosynechococcus vestitus (strain NIES-2133 / IAM M-273 / BP-1).